Consider the following 607-residue polypeptide: uncharacterized protein (607 aa).

The zn(2)-C6 fungal-type DNA-binding region spans 16 to 44; it reads CTVCRKRKLKCDGNKPCGRCIRLNTPKEC.

The protein resides in the nucleus. This is an uncharacterized protein from Saccharomyces cerevisiae (strain ATCC 204508 / S288c) (Baker's yeast).